The following is a 360-amino-acid chain: UDP-D-xylose:L-fucose alpha-1,3-D-xylosyltransferase MGP4 (360 aa).

Positions 1–25 (MAQQKFLHQRPIQNPFTNPFSSSPL) are disordered. Topologically, residues 1–41 (MAQQKFLHQRPIQNPFTNPFSSSPLSTSSISNRPISLLSRN) are cytoplasmic. Residues 14–25 (NPFTNPFSSSPL) are compositionally biased toward low complexity. The helical; Signal-anchor for type II membrane protein transmembrane segment at 42–62 (GLLLLLALLVILGVFLPWAGS) threads the bilayer. Residues 63–360 (PLFPSPNKLS…ASESPLGKLE (298 aa)) lie on the Lumenal side of the membrane. N-linked (GlcNAc...) asparagine glycosylation is found at N93 and N168. A DXD motif motif is present at residues 191 to 193 (DVD). 2 N-linked (GlcNAc...) asparagine glycosylation sites follow: N285 and N310.

It belongs to the glycosyltransferase 77 family. Mn(2+) is required as a cofactor. Mg(2+) serves as cofactor. Widely expressed.

The protein resides in the golgi apparatus membrane. Catalyzes the transfer of D-xylose from UDP-alpha-D-xylose onto L-fucose. Probably involved in the biosynthesis of rhamnogalacturonan II (RG-II) through xylosylation of the internal fucose moiety of the A-chain of RG-II, a structurally complex pectic polysaccharide of the primary cell wall. RG-II is essential for the cell wall integrity of rapidly growing tissues such as roots and pollen tube growth and elongation. The sequence is that of UDP-D-xylose:L-fucose alpha-1,3-D-xylosyltransferase MGP4 from Arabidopsis thaliana (Mouse-ear cress).